A 311-amino-acid chain; its full sequence is Probable deoxyhypusine synthase (311 aa).

Lys284 functions as the Nucleophile in the catalytic mechanism.

This sequence belongs to the deoxyhypusine synthase family. It depends on NAD(+) as a cofactor.

It carries out the reaction [eIF5A protein]-L-lysine + spermidine = [eIF5A protein]-deoxyhypusine + propane-1,3-diamine. It participates in protein modification; eIF5A hypusination. Functionally, catalyzes the NAD-dependent oxidative cleavage of spermidine and the subsequent transfer of the butylamine moiety of spermidine to the epsilon-amino group of a specific lysine residue of the eIF-5A precursor protein to form the intermediate deoxyhypusine residue. This Picrophilus torridus (strain ATCC 700027 / DSM 9790 / JCM 10055 / NBRC 100828 / KAW 2/3) protein is Probable deoxyhypusine synthase.